Here is a 333-residue protein sequence, read N- to C-terminus: Holliday junction branch migration complex subunit RuvB (333 aa).

Residues 1–182 are large ATPase domain (RuvB-L); that stretch reads MDERLLSGES…FGVLSRLEYY (182 aa). Residues leucine 21, arginine 22, glycine 63, lysine 66, threonine 67, threonine 68, 129-131, arginine 172, tyrosine 182, and arginine 219 contribute to the ATP site; that span reads EDF. Residue threonine 67 participates in Mg(2+) binding. Residues 183 to 253 are small ATPAse domain (RuvB-S); that stretch reads TVDQLSAIVE…ITQMALELLQ (71 aa). The head domain (RuvB-H) stretch occupies residues 256-333; it reads KLGLDHIDHK…EHFGMEIPKV (78 aa). Positions 311 and 316 each coordinate DNA.

The protein belongs to the RuvB family. Homohexamer. Forms an RuvA(8)-RuvB(12)-Holliday junction (HJ) complex. HJ DNA is sandwiched between 2 RuvA tetramers; dsDNA enters through RuvA and exits via RuvB. An RuvB hexamer assembles on each DNA strand where it exits the tetramer. Each RuvB hexamer is contacted by two RuvA subunits (via domain III) on 2 adjacent RuvB subunits; this complex drives branch migration. In the full resolvosome a probable DNA-RuvA(4)-RuvB(12)-RuvC(2) complex forms which resolves the HJ.

The protein resides in the cytoplasm. The catalysed reaction is ATP + H2O = ADP + phosphate + H(+). Its function is as follows. The RuvA-RuvB-RuvC complex processes Holliday junction (HJ) DNA during genetic recombination and DNA repair, while the RuvA-RuvB complex plays an important role in the rescue of blocked DNA replication forks via replication fork reversal (RFR). RuvA specifically binds to HJ cruciform DNA, conferring on it an open structure. The RuvB hexamer acts as an ATP-dependent pump, pulling dsDNA into and through the RuvAB complex. RuvB forms 2 homohexamers on either side of HJ DNA bound by 1 or 2 RuvA tetramers; 4 subunits per hexamer contact DNA at a time. Coordinated motions by a converter formed by DNA-disengaged RuvB subunits stimulates ATP hydrolysis and nucleotide exchange. Immobilization of the converter enables RuvB to convert the ATP-contained energy into a lever motion, pulling 2 nucleotides of DNA out of the RuvA tetramer per ATP hydrolyzed, thus driving DNA branch migration. The RuvB motors rotate together with the DNA substrate, which together with the progressing nucleotide cycle form the mechanistic basis for DNA recombination by continuous HJ branch migration. Branch migration allows RuvC to scan DNA until it finds its consensus sequence, where it cleaves and resolves cruciform DNA. The chain is Holliday junction branch migration complex subunit RuvB from Bacillus cereus (strain G9842).